Reading from the N-terminus, the 654-residue chain is tRNA 5-methylaminomethyl-2-thiouridine biosynthesis bifunctional protein MnmC (654 aa).

The segment at 1–235 (MSDFQHAQLD…KREMLGGTYQ (235 aa)) is tRNA (mnm(5)s(2)U34)-methyltransferase. The interval 261 to 654 (VGGGLAGCAS…LRDLVRGQRG (394 aa)) is FAD-dependent cmnm(5)s(2)U34 oxidoreductase.

This sequence in the N-terminal section; belongs to the methyltransferase superfamily. tRNA (mnm(5)s(2)U34)-methyltransferase family. The protein in the C-terminal section; belongs to the DAO family. Requires FAD as cofactor.

It is found in the cytoplasm. The catalysed reaction is 5-aminomethyl-2-thiouridine(34) in tRNA + S-adenosyl-L-methionine = 5-methylaminomethyl-2-thiouridine(34) in tRNA + S-adenosyl-L-homocysteine + H(+). Catalyzes the last two steps in the biosynthesis of 5-methylaminomethyl-2-thiouridine (mnm(5)s(2)U) at the wobble position (U34) in tRNA. Catalyzes the FAD-dependent demodification of cmnm(5)s(2)U34 to nm(5)s(2)U34, followed by the transfer of a methyl group from S-adenosyl-L-methionine to nm(5)s(2)U34, to form mnm(5)s(2)U34. The polypeptide is tRNA 5-methylaminomethyl-2-thiouridine biosynthesis bifunctional protein MnmC (Pseudomonas aeruginosa (strain UCBPP-PA14)).